Here is a 257-residue protein sequence, read N- to C-terminus: Imidazole glycerol phosphate synthase subunit HisF (257 aa).

Catalysis depends on residues D11 and D130.

Belongs to the HisA/HisF family. Heterodimer of HisH and HisF.

It localises to the cytoplasm. It catalyses the reaction 5-[(5-phospho-1-deoxy-D-ribulos-1-ylimino)methylamino]-1-(5-phospho-beta-D-ribosyl)imidazole-4-carboxamide + L-glutamine = D-erythro-1-(imidazol-4-yl)glycerol 3-phosphate + 5-amino-1-(5-phospho-beta-D-ribosyl)imidazole-4-carboxamide + L-glutamate + H(+). Its pathway is amino-acid biosynthesis; L-histidine biosynthesis; L-histidine from 5-phospho-alpha-D-ribose 1-diphosphate: step 5/9. Its function is as follows. IGPS catalyzes the conversion of PRFAR and glutamine to IGP, AICAR and glutamate. The HisF subunit catalyzes the cyclization activity that produces IGP and AICAR from PRFAR using the ammonia provided by the HisH subunit. In Shewanella sp. (strain W3-18-1), this protein is Imidazole glycerol phosphate synthase subunit HisF.